Reading from the N-terminus, the 251-residue chain is Meso-2,3-butanediol dehydrogenase (251 aa).

NAD(+) contacts are provided by N15, M17, D36, D60, V61, and N87. (R)-acetoin is bound by residues S138, S140, and Y151. S138 contacts (S)-acetoin. Residues Y151, K155, V184, and T186 each contribute to the NAD(+) site. Y151 is a (S)-acetoin binding site. Y151 serves as the catalytic Proton acceptor.

Belongs to the short-chain dehydrogenases/reductases (SDR) family. In terms of assembly, homotetramer; dimer of dimers.

It carries out the reaction (R,S)-butane-2,3-diol + NAD(+) = (R)-acetoin + NADH + H(+). It catalyses the reaction (S,S)-butane-2,3-diol + NAD(+) = (S)-acetoin + NADH + H(+). The catalysed reaction is (S)-acetoin + NAD(+) = diacetyl + NADH + H(+). Its activity is regulated as follows. Oxidation of meso-2,3-butanediol is enhanced in the presence of Fe(2+). Reduction of diacetyl and (3S/3R)-acetoin is slightly enhanced in the presence of Mg(2+) and Mn(2+). Activity is inhibited by several metal ions, particularly Fe(3+) for reduction of diacetyl and acetoin. Its function is as follows. Catalyzes the NAD-dependent oxidation of meso-2,3-butanediol to (3R)-acetoin, and of (2S,3S)-2,3-butanediol to (3S)-acetoin, with much lower efficiency. Can also oxidize several primary alcohols such as glycerol, 1-2-pentanediol and 1,2-propanediol, with lower activity. Cannot use (2R,3R)-2,3-butanediol. In the presence of NADH, catalyzes the reduction of (3R)-acetoin to meso-2,3-butanediol, of (3S)-acetoin to (2S,3S)-2,3-butanediol and of diacetyl to (3S)-acetoin. No activity is detected with NADPH/NADP(+). In Serratia marcescens, this protein is Meso-2,3-butanediol dehydrogenase.